Reading from the N-terminus, the 205-residue chain is MPSKKKKYNARFPPARIKKIMQTDEEIGKVAAAVPVIISRALELFLESLLKKACQVTQSRNAKTMTTSHLKQCIELEQQFDFLKDLVASVPDMQGDGEDNHMDGDKGARRGRKPGSGGRKNGGMGTKSKDKKLSGTDSEQEDESEDTDTDGEEETSQPPPQASHPSAHFQSPPTPFLPFASTLPLPPAPPGPSAPDEEDEEDYDS.

Positions 14-77 constitute a Histone-fold domain; it reads PARIKKIMQT…SHLKQCIELE (64 aa). Residues 91-205 are disordered; that stretch reads PDMQGDGEDN…DEEDEEDYDS (115 aa). Over residues 98–108 the composition is skewed to basic and acidic residues; it reads EDNHMDGDKGA. The span at 114–125 shows a compositional bias: gly residues; sequence PGSGGRKNGGMG. Positions 138–155 are enriched in acidic residues; the sequence is SEQEDESEDTDTDGEEET. Residues 184–193 are compositionally biased toward pro residues; sequence PLPPAPPGPS. Residues 195 to 205 show a composition bias toward acidic residues; the sequence is PDEEDEEDYDS.

It belongs to the NC2 alpha/DRAP1 family. As to quaternary structure, heterodimer with DR1. Binds BTAF1. Post-translationally, phosphorylation reduces DNA binding, but has no effect on heterodimerization and TBP binding. Ubiquitous. Highly expressed in adult testis, heart, skeletal muscle, pancreas and brain, and in fetal brain, liver and kidney.

It is found in the nucleus. The association of the DR1/DRAP1 heterodimer with TBP results in a functional repression of both activated and basal transcription of class II genes. This interaction precludes the formation of a transcription-competent complex by inhibiting the association of TFIIA and/or TFIIB with TBP. Can bind to DNA on its own. The chain is Dr1-associated corepressor (DRAP1) from Homo sapiens (Human).